A 292-amino-acid polypeptide reads, in one-letter code: ATP synthase gamma chain (292 aa).

The protein belongs to the ATPase gamma chain family. F-type ATPases have 2 components, CF(1) - the catalytic core - and CF(0) - the membrane proton channel. CF(1) has five subunits: alpha(3), beta(3), gamma(1), delta(1), epsilon(1). CF(0) has three main subunits: a, b and c.

It localises to the cell membrane. Produces ATP from ADP in the presence of a proton gradient across the membrane. The gamma chain is believed to be important in regulating ATPase activity and the flow of protons through the CF(0) complex. The polypeptide is ATP synthase gamma chain (Streptococcus thermophilus (strain CNRZ 1066)).